A 217-amino-acid chain; its full sequence is Homologous-pairing protein 2 homolog (217 aa).

Positions 84 to 152 (ADLHGLDASI…RLKNIKAATN (69 aa)) form a coiled coil. The interval 118 to 182 (TSALTTPEMQ…WRKRKRMTTE (65 aa)) is DNA-binding.

Belongs to the HOP2 family. Interacts with the DNA-binding domain of the nuclear receptors NR3C1/GR, ESR2/ER-beta, THRB and RXRA. Forms a stable heterodimer with MND1. Interacts with PSMC3/TBP1. Phosphorylated by PKA, PKC and MAPK. In terms of tissue distribution, highly expressed in testis and more specifically in spermatocytes. Detected in spleen, ovary and thymus.

The protein resides in the nucleus. Plays an important role in meiotic recombination. Stimulates DMC1-mediated strand exchange required for pairing homologous chromosomes during meiosis. The complex PSMC3IP/MND1 binds DNA, stimulates the recombinase activity of DMC1 as well as DMC1 D-loop formation from double-strand DNA. This complex stabilizes presynaptic RAD51 and DMC1 filaments formed on single strand DNA to capture double-strand DNA. This complex stimulates both synaptic and presynaptic critical steps in RAD51 and DMC1-promoted homologous pairing. May inhibit HIV-1 viral protein TAT activity and modulate the activity of proteasomes through association with PSMC3. The sequence is that of Homologous-pairing protein 2 homolog (Psmc3ip) from Mus musculus (Mouse).